A 1245-amino-acid polypeptide reads, in one-letter code: MNRGFFNMLGRRPFPAPTAMWRPRRRRQAAPMPARNGLASQIQQLTTAVSALVIGQATRPQNPRPRPPPRQKKQAPKQPPKPKKPKPQEKKKKQPAKTKPGKRQRMALKLEADRLFDVKNEDGDVIGHALAMEGKVMKPLHVKGTIDHPVLSKLKFTKSSAYDMEFAQLPVNMRSEAFTYTSEHPEGFYNWHHGAVQYSGGRFTIPRGVGGRGDSGRPIMDNSGRVVAIVLGGADEGTRTALSVVTWNSKGKTIKTTPEGTEEWSAAPLVTAMCLLGNVSFPCNRPPTCYTREPSRALDILEENVNHEAYDTLLNAILRCGSSGRSKRSVTDDFTLTSPYLGTCSYCHHTEPCFSPIKIEQVWDEADDNTIRIQTSAQFGYDKSGAASTNKYRYMSFEQDHTVKEGTMDDIKISTSGPCRRLSYKGYFLLAKCPPGDSVTVSIASSNSATSCTMARKIKPKFVGREKYDLPPVHGKKIPCTVYDRLKETTAGYITMHRPGPHAYTSYLEESSGKVYAKPPSGKNITYECKCGDYKTGTVTTRTEITGCTAIKQCVAYKSDQTKWVFNSPDLIRHADHTAQGKLHLPFKLIPSTCMVPVAHAPNVIHGFKHISLQLDTDHLTLLTTRRLGANPEPTTEWIIGKTVRNFTVDRDGLEYIWGNHEPVRVYAQESAPGDPHGWPHEIVQHYYHRHPVYTILAVASAAVAMMIGVTVAALCACKARRECLTPYALAPNAVIPTSLALLCCVRSANAETFTETMSYFWSNSQPFFWVQLCIPLAAVIVLMRCCSCCLPFLVVAGAYLAKVDAYEHATTVPNVPQIPYKALVERAGYAPLNLEITVMSSEVLPSTNQEYITCKFTTVVPSPKVKCCGSLECQPAAHADYTCKVFGGVYPFMWGGAQCFCDSENSQMSEAYVELSADCATDHAQAIKVHTAAMKVGLRIVYGNTTSFLDVYVNGVTPGTSKDLKVIAGPISASFTPFDHKVVIHRGLVYNYDFPEYGAMKPGVFGDIQATSLTSKDLIASTDIRLLKPSAKNVHVPYTQAASGFEMWKNNSGRPLQETAPFGCKIAVNPLRAVDCSYGNIPISIDIPNAAFIRTSDAPLVSTVKCDVSECTYSADFGGMATLQYVSDREGQCPVHSHSSTATLQESTVHVLEKGAVTVHFSTASPQANFIVSLCGKKTTCNAECKPPADHIVSTPHKNDQEFQAAISKTSWSWLFALFGGASSLLIIGLTIFACSMMLTSTRR.

Positions 1 to 106 (MNRGFFNMLG…KTKPGKRQRM (106 aa)) are disordered. The interval 37-70 (GLASQIQQLTTAVSALVIGQATRPQNPRPRPPPR) is host transcription inhibition. Residues 38 to 49 (LASQIQQLTTAV) are compositionally biased toward polar residues. The short motif at 63–100 (PRPRPPPRQKKQAPKQPPKPKKPKPQEKKKKQPAKTKP) is the Nuclear localization signal element. A compositionally biased stretch (basic residues) spans 67-106 (PPPRQKKQAPKQPPKPKKPKPQEKKKKQPAKTKPGKRQRM). Residues 86 to 115 (KPQEKKKKQPAKTKPGKRQRMALKLEADRL) are binding to the viral RNA. The tract at residues 100 to 114 (PGKRQRMALKLEADR) is ribosome-binding. Residues 114 to 264 (RLFDVKNEDG…KTTPEGTEEW (151 aa)) form the Peptidase S3 domain. His-141 serves as the catalytic Charge relay system. The short motif at 146-156 (IDHPVLSKLKF) is the Nuclear export signal element. The interval 157–162 (TKSSAY) is interaction with spike glycoprotein E2. Asp-163 (charge relay system) is an active-site residue. The tract at residues 185–195 (PEGFYNWHHGA) is dimerization of the capsid protein. Ser-215 acts as the Charge relay system in catalysis. A dimerization of the capsid protein region spans residues 221–225 (DNSGR). Positions 249–253 (SKGKT) are interaction with spike glycoprotein E2. Positions 265–279 (SAAPLVTAMCLLGNV) are functions as an uncleaved signal peptide for the precursor of protein E3/E2. An N-linked (GlcNAc...) asparagine; by host glycan is attached at Asn-278. Disulfide bonds link Cys-283–Cys-289, Cys-480–Cys-594, Cys-529–Cys-554, and Cys-531–Cys-548. Topologically, residues 329-690 (SVTDDFTLTS…HEIVQHYYHR (362 aa)) are extracellular. N-linked (GlcNAc...) asparagine; by host glycosylation is present at Asn-524. Asn-646 carries an N-linked (GlcNAc...) asparagine; by host glycan. Residues 691 to 718 (HPVYTILAVASAAVAMMIGVTVAALCAC) form a helical membrane-spanning segment. Residues 719–723 (KARRE) form an interaction with the capsid protein region. Topologically, residues 719-751 (KARRECLTPYALAPNAVIPTSLALLCCVRSANA) are cytoplasmic. Residues Cys-724, Cys-744, and Cys-745 are each lipidated (S-palmitoyl cysteine; by host). Cys-724 and Cys-745 form a disulfide bridge. Topologically, residues 752–763 (ETFTETMSYFWS) are extracellular. Residues 764-784 (NSQPFFWVQLCIPLAAVIVLM) form a helical membrane-spanning segment. Position 785 (Arg-785) is a topological domain, cytoplasmic. Residues 786-806 (CCSCCLPFLVVAGAYLAKVDA) traverse the membrane as a helical segment. The Extracellular portion of the chain corresponds to 807 to 1214 (YEHATTVPNV…QAAISKTSWS (408 aa)). Intrachain disulfides connect Cys-855–Cys-920, Cys-868–Cys-900, Cys-869–Cys-902, and Cys-874–Cys-884. Residues 890 to 907 (VYPFMWGGAQCFCDSENS) form an E1 fusion peptide loop region. Residues Asn-945 and Asn-1051 are each glycosylated (N-linked (GlcNAc...) asparagine; by host). Cystine bridges form between Cys-1065–Cys-1077, Cys-1107–Cys-1182, Cys-1112–Cys-1186, and Cys-1134–Cys-1176. A helical membrane pass occupies residues 1215-1239 (WLFALFGGASSLLIIGLTIFACSMM). The Cytoplasmic segment spans residues 1240 to 1245 (LTSTRR).

Homodimer. Homomultimer. Interacts with host karyopherin KPNA4; this interaction allows the nuclear import of the viral capsid protein. Interacts with spike glycoprotein E2. Interacts with host IRAK1; the interaction leads to inhibition of IRAK1-dependent signaling. As to quaternary structure, the precursor of protein E3/E2 and E1 form a heterodimer shortly after synthesis. In terms of assembly, the precursor of protein E3/E2 and E1 form a heterodimer shortly after synthesis. Processing of the precursor of protein E3/E2 into E2 and E3 results in a heterodimer of the spike glycoproteins E2 and E1. Spike at virion surface are constituted of a trimer of E2-E1 heterodimers. After target cell attachment and endocytosis, E1 change conformation to form homotrimers. E2-E1 heterodimers interact with host VLDLR or LRP8/APOER2 to mediate viral entry. Interacts with 6K protein. Processing of the precursor of protein E3/E2 into E2 and E3 results in a heterodimer of the spike glycoproteins E2 and E1. Spike at virion surface are constituted of a trimer of E2-E1 heterodimers. E2-E1 heterodimers interact with host VLDLR or LRP8/APOER2 to mediate viral entry. Interacts with 6K protein. Interacts with the capsid protein. As to quaternary structure, oligomer. Interacts with spike glycoprotein E1. Interacts with spike glycoprotein E2. Post-translationally, structural polyprotein: Specific enzymatic cleavages in vivo yield mature proteins. Capsid protein is auto-cleaved during polyprotein translation, unmasking a signal peptide at the N-terminus of the precursor of E3/E2. The remaining polyprotein is then targeted to the host endoplasmic reticulum, where host signal peptidase cleaves it into pE2, 6K and E1 proteins. pE2 is further processed to mature E3 and E2 by host furin in trans-Golgi vesicle. Palmitoylated via thioester bonds. These palmitoylations may induce disruption of the C-terminus transmembrane. This would result in the reorientation of E2 C-terminus from lumenal to cytoplasmic side. In terms of processing, N-glycosylated. Post-translationally, palmitoylated via thioester bonds.

Its subcellular location is the virion. It localises to the host cytoplasm. It is found in the host cell membrane. The protein resides in the host nucleus. The protein localises to the virion membrane. Its subcellular location is the host Golgi apparatus. It localises to the host trans-Golgi network. It is found in the host endoplasmic reticulum. The catalysed reaction is Autocatalytic release of the core protein from the N-terminus of the togavirus structural polyprotein by hydrolysis of a -Trp-|-Ser- bond.. Its function is as follows. Forms an icosahedral capsid with a T=4 symmetry composed of 240 copies of the capsid protein surrounded by a lipid membrane through which penetrate 80 spikes composed of trimers of E1-E2 heterodimers. The capsid protein binds to the viral RNA genome at a site adjacent to a ribosome binding site for viral genome translation following genome release. Possesses a protease activity that results in its autocatalytic cleavage from the nascent structural protein. Following its self-cleavage, the capsid protein transiently associates with ribosomes, and within several minutes the protein binds to viral RNA and rapidly assembles into icosahedric core particles. The resulting nucleocapsid eventually associates with the cytoplasmic domain of the spike glycoprotein E2 at the cell membrane, leading to budding and formation of mature virions. In case of infection, new virions attach to target cells and after clathrin-mediated endocytosis their membrane fuses with the host endosomal membrane. This leads to the release of the nucleocapsid into the cytoplasm, followed by an uncoating event necessary for the genomic RNA to become accessible. The uncoating might be triggered by the interaction of capsid proteins with ribosomes. Binding of ribosomes would release the genomic RNA since the same region is genomic RNA-binding and ribosome-binding. Specifically inhibits interleukin-1 receptor-associated kinase 1/IRAK1-dependent signaling during viral entry, representing a means by which the alphaviruses may evade innate immune detection and activation prior to viral gene expression. Functionally, provides the signal sequence for the translocation of the precursor of protein E3/E2 to the host endoplasmic reticulum. Furin-cleaved E3 remains associated with spike glycoprotein E1 and mediates pH protection of the latter during the transport via the secretory pathway. After virion release from the host cell, the assembly protein E3 is gradually released in the extracellular space. In terms of biological role, plays a role in viral attachment to target host cell, by binding to the cell receptors VLDLR or LRP8/APOER2. Synthesized as a pE2 precursor which is processed by furin at the cell membrane just before virion budding, giving rise to E2-E1 heterodimer. The pE2-E1 heterodimer is stable, whereas E2-E1 is unstable and dissociate at low pH. pE2 is processed at the last step, presumably to avoid E1 fusion activation before its final export to cell surface. E2 C-terminus contains a transitory transmembrane that would be disrupted by palmitoylation, resulting in reorientation of the C-terminal tail from lumenal to cytoplasmic side. This step is critical since E2 C-terminus is involved in budding by interacting with capsid proteins. This release of E2 C-terminus in cytoplasm occurs lately in protein export, and precludes premature assembly of particles at the endoplasmic reticulum membrane. Acts as a viroporin that participates in virus glycoprotein processing and transport to the plasma membrane, cell permeabilization and budding of viral particles. Disrupts the calcium homeostasis of the cell, probably at the endoplasmic reticulum level resulting in the increased levels of cytoplasmic calcium. Because of its lipophilic properties, the 6K protein is postulated to influence the selection of lipids that interact with the transmembrane domains of the glycoproteins, which, in turn, affects the deformability of the bilayer required for the extreme curvature that occurs as budding proceeds. Present in low amount in virions, about 3% compared to viral glycoproteins. Its function is as follows. Class II viral fusion protein. Fusion activity is inactive as long as E1 is bound to E2 in mature virion. After virus attachment to target cell via host VLDLR or LRP8/APOER2 and endocytosis, acidification of the endosome induces dissociation of E1/E2 heterodimer and concomitant trimerization of the E1 subunits. This E1 trimer is fusion active, and promotes release of viral nucleocapsid in cytoplasm after endosome and viral membrane fusion. Efficient fusion requires the presence of cholesterol and sphingolipid in the target membrane. This is Structural polyprotein from Acrocephalus scirpaceus (Eurasian reed-warbler).